The following is a 122-amino-acid chain: Phospholipase A2 nigroviriditoxin basic subunit B (122 aa).

7 cysteine pairs are disulfide-bonded: cysteine 26–cysteine 115, cysteine 28–cysteine 44, cysteine 43–cysteine 95, cysteine 49–cysteine 122, cysteine 50–cysteine 88, cysteine 57–cysteine 81, and cysteine 75–cysteine 86. The Ca(2+) site is built by tyrosine 27, glycine 29, and glycine 31. Residue histidine 47 is part of the active site. Aspartate 48 contacts Ca(2+). Aspartate 89 is an active-site residue.

Belongs to the phospholipase A2 family. Group II subfamily. D49 sub-subfamily. As to quaternary structure, nigroviriditoxin is a heterodimer of an acidic subunit A and a basic subunit B. Ca(2+) serves as cofactor. In terms of tissue distribution, expressed by the venom gland.

The protein localises to the secreted. The enzyme catalyses a 1,2-diacyl-sn-glycero-3-phosphocholine + H2O = a 1-acyl-sn-glycero-3-phosphocholine + a fatty acid + H(+). In terms of biological role, heterodimer A-B: Nigroviriditoxin possesses phospholipase A2 (PLA2) activity. It consists of a non-covalent association of a basic PLA2 subunit B with a non-enzymatic subunit A. Functionally, subunit B: Snake venom phospholipase A2 (PLA2) that induces myonecrosis in mice. PLA2 catalyzes the calcium-dependent hydrolysis of the 2-acyl groups in 3-sn-phosphoglycerides. In Bothriechis nigroviridis (Black-speckled palm pit viper), this protein is Phospholipase A2 nigroviriditoxin basic subunit B.